Reading from the N-terminus, the 233-residue chain is Large ribosomal subunit protein uL1 (233 aa).

The protein belongs to the universal ribosomal protein uL1 family. In terms of assembly, part of the 50S ribosomal subunit.

In terms of biological role, binds directly to 23S rRNA. The L1 stalk is quite mobile in the ribosome, and is involved in E site tRNA release. Functionally, protein L1 is also a translational repressor protein, it controls the translation of the L11 operon by binding to its mRNA. The sequence is that of Large ribosomal subunit protein uL1 from Geobacillus kaustophilus (strain HTA426).